Reading from the N-terminus, the 318-residue chain is Ribosomal protein L11 methyltransferase (318 aa).

S-adenosyl-L-methionine is bound by residues threonine 161, glycine 182, aspartate 204, and asparagine 247.

Belongs to the methyltransferase superfamily. PrmA family.

Its subcellular location is the cytoplasm. It carries out the reaction L-lysyl-[protein] + 3 S-adenosyl-L-methionine = N(6),N(6),N(6)-trimethyl-L-lysyl-[protein] + 3 S-adenosyl-L-homocysteine + 3 H(+). Methylates ribosomal protein L11. The sequence is that of Ribosomal protein L11 methyltransferase from Moorella thermoacetica (strain ATCC 39073 / JCM 9320).